A 274-amino-acid polypeptide reads, in one-letter code: MATYFVGDIQGCFDELHVLLAKVDFNPSKDELWVVGDMVARGTQSLETLRYLKGLEGSVKPVLGNHDLHLMALHGKVKRVNPKDNLGALLAAPDLNQLIDWLRLQPLAREHKAHSVLMAHAGIPPQWDVKTVLKESRKVQEALARDDYIEHLIAKMYTNSVSEWSPETKGLKRLVYTINALTRMRFLHSDGRLNFDCKLPPAKGEKEGLIPWFKQPGRAMKGHTLVFGHWAALMGEVNQPGLQALDTGCCWGQYLTLWHLESNQKITQNKLKKS.

It belongs to the Ap4A hydrolase family.

The enzyme catalyses P(1),P(4)-bis(5'-adenosyl) tetraphosphate + H2O = 2 ADP + 2 H(+). Functionally, hydrolyzes diadenosine 5',5'''-P1,P4-tetraphosphate to yield ADP. The polypeptide is Bis(5'-nucleosyl)-tetraphosphatase, symmetrical (Shewanella loihica (strain ATCC BAA-1088 / PV-4)).